Consider the following 344-residue polypeptide: Outer membrane protein B (344 aa).

An N-terminal signal peptide occupies residues 1–30; the sequence is MNSKMLKHLRLATLSFSMFFGIVSSPAVYA.

Belongs to the chlamydial OMP family.

The protein resides in the cell outer membrane. This Chlamydia pneumoniae (Chlamydophila pneumoniae) protein is Outer membrane protein B (ompB).